A 334-amino-acid chain; its full sequence is Tetraacyldisaccharide 4'-kinase (334 aa).

Threonine 60–threonine 67 is an ATP binding site.

Belongs to the LpxK family.

The catalysed reaction is a lipid A disaccharide + ATP = a lipid IVA + ADP + H(+). It functions in the pathway glycolipid biosynthesis; lipid IV(A) biosynthesis; lipid IV(A) from (3R)-3-hydroxytetradecanoyl-[acyl-carrier-protein] and UDP-N-acetyl-alpha-D-glucosamine: step 6/6. Transfers the gamma-phosphate of ATP to the 4'-position of a tetraacyldisaccharide 1-phosphate intermediate (termed DS-1-P) to form tetraacyldisaccharide 1,4'-bis-phosphate (lipid IVA). This is Tetraacyldisaccharide 4'-kinase from Stutzerimonas stutzeri (strain A1501) (Pseudomonas stutzeri).